A 2278-amino-acid polypeptide reads, in one-letter code: 1-phosphatidylinositol 3-phosphate 5-kinase FAB1 (2278 aa).

Disordered regions lie at residues 1-30 (MSSE…SVNT) and 76-144 (PPTS…LQLP). The residue at position 2 (serine 2) is an N-acetylserine. The required for localization to the vacuole membrane stretch occupies residues 2 to 676 (SSEEPHASIS…NSTKSFQRAQ (675 aa)). Low complexity-rich tracts occupy residues 18–28 (VRSSSTGTSSV) and 76–89 (PPTS…TSTS). The segment covering 90–128 (HVTGTASHSNIKANANTSTSVNKKNLPPTTSGRIPSSTI) has biased composition (polar residues). A Phosphoserine modification is found at serine 186. Residues 240–299 (DESSKECFSCGKTFNTFRRKHHCRICGQIFCSSCTLLIDGDRFGCHAKMRVCYNCYEHAD) form an FYVE-type zinc finger. Positions 246, 249, 262, 265, 270, 273, 291, and 294 each coordinate Zn(2+). Disordered regions lie at residues 302-337 (EDSS…HSHS), 472-500 (ITIN…NNPA), 514-534 (NSVN…AQSS), 556-697 (FNYN…PNNS), and 727-766 (DSSP…NINT). The segment covering 472–498 (ITINNLNNTTSNNSNYNNTNSNSNINN) has biased composition (low complexity). Positions 557–570 (NYNSKGPSQQNDTA) are enriched in polar residues. A compositionally biased stretch (low complexity) spans 571-601 (NGNNDNNNNNNNNNNNNNNNSASGIADNNNI). Polar residues predominate over residues 602–611 (PSNDNGTTFT). The span at 634–644 (LNEEDSSEDEG) shows a compositional bias: acidic residues. Polar residues predominate over residues 665–679 (MRNSTKSFQRAQASL). Basic residues predominate over residues 682–692 (MRFRRKSKSKH). Positions 729–741 (SPLQDKASSSAAS) are enriched in polar residues. A compositionally biased stretch (low complexity) spans 749-763 (SNSSGSNNNSNSNSN). Positions 766–1039 (TDPWKRIASI…KIKQVSEFMV (274 aa)) are CCT domain. The segment at 1181–1500 (SSSQNLLGTG…TAKQLKKLFY (320 aa)) is CCR domain. Positions 1506–1554 (DSEDKKSLHDEKAKTRKPEKNELPLEGLKDVEKPKIDSKNTTENRDRTN) are enriched in basic and acidic residues. The disordered stretch occupies residues 1506–1627 (DSEDKKSLHD…TRPNIRKMSS (122 aa)). A compositionally biased stretch (polar residues) spans 1555 to 1564 (EPQNAVTITT). Residues 1580–1595 (LTVTPSASSVSSSLTP) are compositionally biased toward low complexity. A phosphoserine mark is found at serine 1627 and serine 1630. Residues 1766–1776 (SGKTTASTHLN) show a composition bias toward polar residues. Disordered regions lie at residues 1766–1804 (SGKT…EPLP) and 1891–1972 (QQQQ…THSQ). Basic and acidic residues predominate over residues 1780 to 1799 (VVKETSENPKSIVRESDNSK). Residues 1918 to 1932 (DPSVNISPSVSTTSH) are compositionally biased toward polar residues. Positions 1932–2266 (HNKGRDSEIS…RFREAMERYI (335 aa)) constitute a PIPK domain. Serine 1938 bears the Phosphoserine mark. Residue threonine 1953 is modified to Phosphothreonine.

As to quaternary structure, component of the PI(3,5)P2 regulatory complex, composed of ATG18, FIG4, FAB1, VAC14 and VAC7. VAC14 nucleates the assembly of the complex and serves as a scaffold. It depends on Mg(2+) as a cofactor. Mn(2+) serves as cofactor.

It is found in the vacuole membrane. It localises to the endosome membrane. It catalyses the reaction a 1,2-diacyl-sn-glycero-3-phospho-(1D-myo-inositol-3-phosphate) + ATP = a 1,2-diacyl-sn-glycero-3-phospho-(1D-myo-inositol-3,5-bisphosphate) + ADP + H(+). It carries out the reaction 1,2-dihexadecanoyl-sn-glycero-3-phospho-(1D-myo-inositol-3-phosphate) + ATP = 1,2-dihexadecanoyl-sn-glycero-3-phospho-(1D-myo-inositol-3,5-phosphate) + ADP + H(+). Activated by VAC14 and VAC7. VAC14 acts as a specific osmotic response regulator. Its function is as follows. The PI(3,5)P2 regulatory complex regulates both the synthesis and turnover of phosphatidylinositol 3,5-bisphosphate (PtdIns(3,5)P2). Catalyzes the phosphorylation of phosphatidylinositol 3-phosphate on the fifth hydroxyl of the myo-inositol ring, to form phosphatidylinositol 3,5-bisphosphate. Required for endocytic-vacuolar pathway and nuclear migration. The product of the reaction, PI(3,5)P2 is an important regulator of vacuole homeostasis perhaps by controlling membrane flux to and/or from the vacuole. PI(3,5)P2 regulates the transition between trans-SNARE complex formation and vacuole membrane fusion. Hyperosmotic shock-induced increase in the levels of PtdIns(3,5)P2 requires the presence of VAC7, VAC14, and/or FIG4. The sequence is that of 1-phosphatidylinositol 3-phosphate 5-kinase FAB1 from Saccharomyces cerevisiae (strain ATCC 204508 / S288c) (Baker's yeast).